The primary structure comprises 379 residues: Alkanesulfonate monooxygenase (379 aa).

This sequence belongs to the SsuD family.

The enzyme catalyses an alkanesulfonate + FMNH2 + O2 = an aldehyde + FMN + sulfite + H2O + 2 H(+). Functionally, catalyzes the desulfonation of aliphatic sulfonates. The sequence is that of Alkanesulfonate monooxygenase from Sorangium cellulosum (strain So ce56) (Polyangium cellulosum (strain So ce56)).